The primary structure comprises 337 residues: Glyceraldehyde-3-phosphate dehydrogenase 2, cytosolic (337 aa).

A binding to NAD region spans residues 1–151; the sequence is MGKIKIGING…YTSDVNIVSN (151 aa). Residues 13-14, Asp35, and Arg82 contribute to the NAD(+) site; that span reads RI. The catalytic stretch occupies residues 152–337; it reads ASCTTNCLAP…DLIRHMFKTQ (186 aa). D-glyceraldehyde 3-phosphate-binding positions include 153-155, Thr184, 213-214, and Arg236; these read SCT and TG. Catalysis depends on Cys154, which acts as the Nucleophile. Residue Asn318 participates in NAD(+) binding.

The protein belongs to the glyceraldehyde-3-phosphate dehydrogenase family. Homotetramer. As to expression, developing seeds, seedling roots and shoots, and embryo.

It is found in the cytoplasm. The catalysed reaction is D-glyceraldehyde 3-phosphate + phosphate + NAD(+) = (2R)-3-phospho-glyceroyl phosphate + NADH + H(+). It participates in carbohydrate degradation; glycolysis; pyruvate from D-glyceraldehyde 3-phosphate: step 1/5. In terms of biological role, key enzyme in glycolysis that catalyzes the first step of the pathway by converting D-glyceraldehyde 3-phosphate (G3P) into 3-phospho-D-glyceroyl phosphate. Essential for the maintenance of cellular ATP levels and carbohydrate metabolism. This Zea mays (Maize) protein is Glyceraldehyde-3-phosphate dehydrogenase 2, cytosolic (GAPC2).